The following is a 1659-amino-acid chain: Fatty acid synthase subunit alpha (1659 aa).

The interval 114-139 (TQAQASGGAGTIAGAGSSTAPVTAPP) is disordered. The 76-residue stretch at 160–235 (AQAFEIVRTL…AALQKTFTGQ (76 aa)) folds into the Carrier domain. Serine 195 carries the O-(pantetheine 4'-phosphoryl)serine modification. A ketoreductase (KR) domain region spans residues 588 to 826 (GRSVLITGAG…LCLMFNTMCS (239 aa)). Residues 1030–1575 (KQLLHEVLIQ…QKGAQTIVVH (546 aa)) enclose the Ketosynthase family 3 (KS3) domain. Catalysis depends on for beta-ketoacyl synthase activity residues cysteine 1217, histidine 1458, and histidine 1499. The tract at residues 1631-1659 (ETLLDPTPPQTNVDDRVARSIVQQESAEP) is disordered.

The protein belongs to the thiolase-like superfamily. Fungal fatty acid synthetase subunit alpha family. As to quaternary structure, [Alpha(6)beta(6)] hexamers of two multifunctional subunits (alpha and beta). 4'-phosphopantetheine is transferred from CoA to a specific serine of the acyl carrier domain by the C-terminal PPT domain. This modification is essential for activity because fatty acids are bound in thioester linkage to the sulfhydryl of the prosthetic group.

It catalyses the reaction acetyl-CoA + n malonyl-CoA + 2n NADPH + 4n H(+) = a long-chain-acyl-CoA + n CoA + n CO2 + 2n NADP(+).. It carries out the reaction a fatty acyl-[ACP] + malonyl-[ACP] + H(+) = a 3-oxoacyl-[ACP] + holo-[ACP] + CO2. The enzyme catalyses a (3R)-hydroxyacyl-[ACP] + NADP(+) = a 3-oxoacyl-[ACP] + NADPH + H(+). It functions in the pathway secondary metabolite biosynthesis. Functionally, fatty acid synthase subunit alpha; part of the gene cluster that mediates the biosynthesis of aspercryptins, linear lipopeptides built from six amino acids including 2 highly unusual and nonproteogenic amino acids, 2-amino-octanoic acid (2aoa) and 2-amino-dodecanol (2adol). The core structure of aspercryptins is as follows: Ser/Ala-Thr-Ile/Val-2aoa-Asn-2adol. The first step of aspercryptin biosynthesis is the generation of the fatty acid precursors, octanoic and dodecanoic acids, by the FAS subunits atnF and atnM. The fatty acid precursors are likely transformed into the corresponding alpha-amino fatty acids in three steps. First, they are hydroxylated by the cytochrome P450 monooxygenase atnE, then oxidized to the corresponding alpha-keto acids by the NAD(P)-dependent oxidoreductase atnD, and finally converted to the alpha-amino fatty acids by the PLP-dependent aminotransferases atnH or atnJ. the alpha-amino fatty acids, 2-amino-octanoic and 2-amino-dodecanoic acids, are recognized, activated, and covalently tethered to the NRPS atnA by its fourth and sixth adenylation domains. The second module of atnA is the Thr module and contains an epimerase (E) domain responsible for the epimerization of Thr to D-allo-Thr. Additionally, despite atnA having only one epimerase domain, the first amino acid of aspercryptin A1 is D-Ser, suggesting that serine is either loaded directly as D-Ser on the first module or that the epimerase domain in the threonine module epimerizes both L-Ser and L-Thr. After condensation of the hexapeptide of aspercryptin, the C-terminal reductase (TE) domain might be involved in the reductive release and production of the aldehyde hexapeptide. Further reduction would generate aspercryptins. The variety of aspercryptins produced reflects the flexibility of the atnA NRPS, allowing incorporation of alanine instead of serine, valine for isoleucine, and a C10 fatty amino alcohol instead of the C12 version. AtnB seems to be involved in the selectivity for Ile versus Val by the third module. Moreover, type B, C and D aspercryptins have an additional N-terminal cichorine, acetyl and propionyl group respectively. This chain is Fatty acid synthase subunit alpha, found in Emericella nidulans (strain FGSC A4 / ATCC 38163 / CBS 112.46 / NRRL 194 / M139) (Aspergillus nidulans).